Consider the following 59-residue polypeptide: Chromatin protein Cren7 (59 aa).

Belongs to the Cren7 family. Monomer. Methylated at multiple sites, to varying extents.

The protein localises to the chromosome. Its subcellular location is the cytoplasm. In terms of biological role, a chromatin protein, binds double-stranded DNA without sequence specificity. Constrains negative DNA supercoils. This chain is Chromatin protein Cren7, found in Pyrobaculum arsenaticum (strain DSM 13514 / JCM 11321 / PZ6).